A 484-amino-acid chain; its full sequence is Probable cytochrome P450 316a1 (484 aa).

C433 serves as a coordination point for heme.

This sequence belongs to the cytochrome P450 family. The cofactor is heme.

It localises to the endoplasmic reticulum membrane. The protein resides in the microsome membrane. Its function is as follows. May be involved in the metabolism of insect hormones and in the breakdown of synthetic insecticides. This chain is Probable cytochrome P450 316a1 (Cyp316a1), found in Drosophila melanogaster (Fruit fly).